A 107-amino-acid chain; its full sequence is Quaternary ammonium compound-resistance protein QacC (107 aa).

Transmembrane regions (helical) follow at residues 26-46 (FSKFIPSLGTIISFGICFYFL), 57-77 (ITYATWAGLGLVLTTVVSIII), and 84-104 (LITIVSIVLIIVGVVSLNIFG).

It belongs to the drug/metabolite transporter (DMT) superfamily. Small multidrug resistance (SMR) (TC 2.A.7.1) family.

The protein resides in the cell membrane. Multidrug exporter. Is implicated for the resistance to bacteriocidal quaternary ammonium compounds. The polypeptide is Quaternary ammonium compound-resistance protein QacC (Staphylococcus sp. (strain ST827)).